Reading from the N-terminus, the 584-residue chain is Arginine--tRNA ligase (584 aa).

The 'HIGH' region motif lies at 126-136 (PNIAKEMHVGH).

Belongs to the class-I aminoacyl-tRNA synthetase family. Monomer.

It localises to the cytoplasm. It carries out the reaction tRNA(Arg) + L-arginine + ATP = L-arginyl-tRNA(Arg) + AMP + diphosphate. The protein is Arginine--tRNA ligase (argS) of Synechocystis sp. (strain ATCC 27184 / PCC 6803 / Kazusa).